Here is a 107-residue protein sequence, read N- to C-terminus: MTKSELVAQLASRFPQLVLKDADFAVKTMLDAMSDALAKGHRIEIRGFGSFGLNRRPARVGRNPKSGEKVQVPEKFVPHFKPGKELRERVDGRAGEPLKADDPDDER.

The segment at 76–107 is disordered; the sequence is FVPHFKPGKELRERVDGRAGEPLKADDPDDER. Over residues 82-101 the composition is skewed to basic and acidic residues; sequence PGKELRERVDGRAGEPLKAD.

This sequence belongs to the bacterial histone-like protein family. In terms of assembly, heterodimer of an alpha and a beta chain.

This protein is one of the two subunits of integration host factor, a specific DNA-binding protein that functions in genetic recombination as well as in transcriptional and translational control. This Burkholderia cenocepacia (strain ATCC BAA-245 / DSM 16553 / LMG 16656 / NCTC 13227 / J2315 / CF5610) (Burkholderia cepacia (strain J2315)) protein is Integration host factor subunit beta.